A 1436-amino-acid chain; its full sequence is Probable ATP-dependent RNA helicase spindle-E (1436 aa).

Residues 124–291 (LAAINANPVV…FTTTNSIPPV (168 aa)) form the Helicase ATP-binding domain. 137–144 (GETGCGKT) is an ATP binding site. The DEAH box signature appears at 237 to 240 (DEVH). Residues 337–524 (KIIMVIDNME…NSVLRAKELE (188 aa)) form the Helicase C-terminal domain. The region spanning 940 to 1003 (ACDISKGMMV…RFMSEELIQQ (64 aa)) is the Tudor domain.

It belongs to the DEAD box helicase family. DEAH subfamily.

Its subcellular location is the cytoplasm. The enzyme catalyses ATP + H2O = ADP + phosphate + H(+). Its function is as follows. Probable ATP-binding RNA helicase which plays a central role during spermatogenesis and oogenesis by repressing transposable elements and preventing their mobilization, which is essential for the germline integrity. Acts via the piRNA metabolic process, which mediates the repression of transposable elements during meiosis by forming complexes composed of piRNAs and Piwi and govern the methylation and subsequent repression of transposons. Involved in the repression of LTR retrotransposon copia. Also involved in telomere regulation by repressing specialized telomeric retroelements HeT-A, TAHRE, and TART; Drosophila telomeres being maintained by transposition of specialized telomeric retroelements. Involved in telomeric trans-silencing, a repression mechanism by which a transposon or a transgene inserted in subtelomeric heterochromatin has the capacity to repress in trans in the female germline, a homologous transposon, or transgene located in euchromatin. Involved in the repression of testis-expressed Stellate genes by the homologous Su(Ste) repeats. Required for anteroposterior and dorsoventral axis formation during oogenesis. This chain is Probable ATP-dependent RNA helicase spindle-E (spn-E), found in Drosophila yakuba (Fruit fly).